Reading from the N-terminus, the 428-residue chain is Dihydroorotase (428 aa).

Zn(2+)-binding residues include H61 and H63. Residues 63–65 (HLR) and N95 each bind substrate. Positions 153, 180, and 233 each coordinate Zn(2+). N279 serves as a coordination point for substrate. Zn(2+) is bound at residue D306. D306 is a catalytic residue. Substrate is bound by residues H310 and 324-325 (FG).

This sequence belongs to the metallo-dependent hydrolases superfamily. DHOase family. Class I DHOase subfamily. Requires Zn(2+) as cofactor.

The enzyme catalyses (S)-dihydroorotate + H2O = N-carbamoyl-L-aspartate + H(+). Its pathway is pyrimidine metabolism; UMP biosynthesis via de novo pathway; (S)-dihydroorotate from bicarbonate: step 3/3. Its function is as follows. Catalyzes the reversible cyclization of carbamoyl aspartate to dihydroorotate. This chain is Dihydroorotase, found in Geobacillus thermodenitrificans (strain NG80-2).